We begin with the raw amino-acid sequence, 356 residues long: MRKKIVLTGGGTAGHVMVNVALIPKLKEQGWDIVYIGSHEGIEREIIGRIDGVPYYSVSTGKLRRYFDWKNFKDPFNVLKGVWQAYRLIQKEKPDIVFSKGGFVSVPVILGAWLNGVPSVIHESDLTPGLANKIAMPFATKICLTFPETKQHVNTDKAVYVGAVVREELKHGSAEQGRKLCQFDGQKPVLLAMGGSLGSKKINDALRASLPVLLSEFDIVHICGKGNVDTSLVGQKGYKQFEYVNEELPDLLALSDIVVSRAGANAIFELLALRKPMLLIPLSKAASRGDQILNARSFEKAGYAEVLMEEEVTNESLPAAIHRLYENKDRYKKNMEKSGSSDPLQTLLALIQNTAR.

UDP-N-acetyl-alpha-D-glucosamine contacts are provided by residues Thr-12–Gly-14, Arg-166, Ser-196, and Gln-291.

It belongs to the glycosyltransferase 28 family. MurG subfamily.

The protein resides in the cell membrane. It catalyses the reaction di-trans,octa-cis-undecaprenyl diphospho-N-acetyl-alpha-D-muramoyl-L-alanyl-D-glutamyl-meso-2,6-diaminopimeloyl-D-alanyl-D-alanine + UDP-N-acetyl-alpha-D-glucosamine = di-trans,octa-cis-undecaprenyl diphospho-[N-acetyl-alpha-D-glucosaminyl-(1-&gt;4)]-N-acetyl-alpha-D-muramoyl-L-alanyl-D-glutamyl-meso-2,6-diaminopimeloyl-D-alanyl-D-alanine + UDP + H(+). Its pathway is cell wall biogenesis; peptidoglycan biosynthesis. Its function is as follows. Cell wall formation. Catalyzes the transfer of a GlcNAc subunit on undecaprenyl-pyrophosphoryl-MurNAc-pentapeptide (lipid intermediate I) to form undecaprenyl-pyrophosphoryl-MurNAc-(pentapeptide)GlcNAc (lipid intermediate II). The sequence is that of UDP-N-acetylglucosamine--N-acetylmuramyl-(pentapeptide) pyrophosphoryl-undecaprenol N-acetylglucosamine transferase from Geobacillus thermodenitrificans (strain NG80-2).